The following is a 577-amino-acid chain: Methionine--tRNA ligase, mitochondrial (577 aa).

A 'HIGH' region motif is present at residues 25 to 37 (PIFYVNAAPHIGH). A 'KMSKS' region motif is present at residues 329–333 (KMSKS). K332 contributes to the ATP binding site.

Belongs to the class-I aminoacyl-tRNA synthetase family.

The protein localises to the mitochondrion matrix. The enzyme catalyses tRNA(Met) + L-methionine + ATP = L-methionyl-tRNA(Met) + AMP + diphosphate. The sequence is that of Methionine--tRNA ligase, mitochondrial (MSM1) from Candida albicans (Yeast).